Consider the following 142-residue polypeptide: Putative pre-16S rRNA nuclease (142 aa).

This sequence belongs to the YqgF nuclease family.

The protein localises to the cytoplasm. Could be a nuclease involved in processing of the 5'-end of pre-16S rRNA. In Mesoplasma florum (strain ATCC 33453 / NBRC 100688 / NCTC 11704 / L1) (Acholeplasma florum), this protein is Putative pre-16S rRNA nuclease.